We begin with the raw amino-acid sequence, 158 residues long: NADH-quinone oxidoreductase subunit B (158 aa).

[4Fe-4S] cluster is bound by residues Cys-37, Cys-38, Cys-102, and Cys-132.

This sequence belongs to the complex I 20 kDa subunit family. As to quaternary structure, NDH-1 is composed of 14 different subunits. Subunits NuoB, C, D, E, F, and G constitute the peripheral sector of the complex. [4Fe-4S] cluster is required as a cofactor.

It localises to the cell inner membrane. The enzyme catalyses a quinone + NADH + 5 H(+)(in) = a quinol + NAD(+) + 4 H(+)(out). Its function is as follows. NDH-1 shuttles electrons from NADH, via FMN and iron-sulfur (Fe-S) centers, to quinones in the respiratory chain. Couples the redox reaction to proton translocation (for every two electrons transferred, four hydrogen ions are translocated across the cytoplasmic membrane), and thus conserves the redox energy in a proton gradient. This is NADH-quinone oxidoreductase subunit B from Legionella pneumophila (strain Corby).